The chain runs to 430 residues: tRNA(Ile)-lysidine synthase (430 aa).

21-26 serves as a coordination point for ATP; the sequence is SGGLDS.

This sequence belongs to the tRNA(Ile)-lysidine synthase family.

The protein resides in the cytoplasm. It catalyses the reaction cytidine(34) in tRNA(Ile2) + L-lysine + ATP = lysidine(34) in tRNA(Ile2) + AMP + diphosphate + H(+). Ligates lysine onto the cytidine present at position 34 of the AUA codon-specific tRNA(Ile) that contains the anticodon CAU, in an ATP-dependent manner. Cytidine is converted to lysidine, thus changing the amino acid specificity of the tRNA from methionine to isoleucine. The polypeptide is tRNA(Ile)-lysidine synthase (Salmonella schwarzengrund (strain CVM19633)).